The sequence spans 440 residues: Ribulose bisphosphate carboxylase large chain (440 aa).

Position 4 is an N6,N6,N6-trimethyllysine (K4). Substrate-binding residues include N113 and T163. The Proton acceptor role is filled by K165. Residue K167 coordinates substrate. Residues K191, D193, and E194 each contribute to the Mg(2+) site. K191 bears the N6-carboxylysine mark. H284 (proton acceptor) is an active-site residue. R285, H317, and S369 together coordinate substrate.

Belongs to the RuBisCO large chain family. Type I subfamily. In terms of assembly, heterohexadecamer of 8 large chains and 8 small chains; disulfide-linked. The disulfide link is formed within the large subunit homodimers. Requires Mg(2+) as cofactor. Post-translationally, the disulfide bond which can form in the large chain dimeric partners within the hexadecamer appears to be associated with oxidative stress and protein turnover.

It localises to the plastid. The protein localises to the chloroplast. The catalysed reaction is 2 (2R)-3-phosphoglycerate + 2 H(+) = D-ribulose 1,5-bisphosphate + CO2 + H2O. It catalyses the reaction D-ribulose 1,5-bisphosphate + O2 = 2-phosphoglycolate + (2R)-3-phosphoglycerate + 2 H(+). RuBisCO catalyzes two reactions: the carboxylation of D-ribulose 1,5-bisphosphate, the primary event in carbon dioxide fixation, as well as the oxidative fragmentation of the pentose substrate in the photorespiration process. Both reactions occur simultaneously and in competition at the same active site. The sequence is that of Ribulose bisphosphate carboxylase large chain from Pteris vittata (Chinese ladder brake).